Reading from the N-terminus, the 57-residue chain is Small ribosomal subunit protein bS21 (57 aa).

The segment at 35 to 57 (RERYEKPSLRRKRKQEAARKRNR) is disordered.

It belongs to the bacterial ribosomal protein bS21 family.

This chain is Small ribosomal subunit protein bS21, found in Thermosynechococcus vestitus (strain NIES-2133 / IAM M-273 / BP-1).